A 260-amino-acid polypeptide reads, in one-letter code: Pyridoxine 5'-phosphate synthase (260 aa).

Asn-15 contacts 3-amino-2-oxopropyl phosphate. Residue Asp-17 to His-18 participates in 1-deoxy-D-xylulose 5-phosphate binding. Arg-26 contacts 3-amino-2-oxopropyl phosphate. Catalysis depends on His-51, which acts as the Proton acceptor. Positions 53 and 58 each coordinate 1-deoxy-D-xylulose 5-phosphate. Glu-78 (proton acceptor) is an active-site residue. Thr-108 lines the 1-deoxy-D-xylulose 5-phosphate pocket. The active-site Proton donor is His-199. 3-amino-2-oxopropyl phosphate contacts are provided by residues Gly-200 and Gly-221–His-222.

This sequence belongs to the PNP synthase family. In terms of assembly, homooctamer; tetramer of dimers.

It localises to the cytoplasm. The enzyme catalyses 3-amino-2-oxopropyl phosphate + 1-deoxy-D-xylulose 5-phosphate = pyridoxine 5'-phosphate + phosphate + 2 H2O + H(+). Its pathway is cofactor biosynthesis; pyridoxine 5'-phosphate biosynthesis; pyridoxine 5'-phosphate from D-erythrose 4-phosphate: step 5/5. Catalyzes the complicated ring closure reaction between the two acyclic compounds 1-deoxy-D-xylulose-5-phosphate (DXP) and 3-amino-2-oxopropyl phosphate (1-amino-acetone-3-phosphate or AAP) to form pyridoxine 5'-phosphate (PNP) and inorganic phosphate. The sequence is that of Pyridoxine 5'-phosphate synthase from Cupriavidus metallidurans (strain ATCC 43123 / DSM 2839 / NBRC 102507 / CH34) (Ralstonia metallidurans).